A 192-amino-acid polypeptide reads, in one-letter code: Signal peptidase complex catalytic subunit SEC11C (192 aa).

Over 2–28 (VRAGAVGTHLPASGLDIFGDLRKMNKR) the chain is Cytoplasmic. Residues 29–48 (QLYYQVLNFAMIVSSALMIW) form a helical; Signal-anchor for type II membrane protein membrane-spanning segment. The Lumenal segment spans residues 49–192 (KGLIVLTGSE…GAYVLLKRES (144 aa)). Active-site charge relay system residues include Ser-68, His-108, and Asp-134. The C-terminal short (CTS) helix stretch occupies residues 177–188 (ALLAVMGAYVLL).

This sequence belongs to the peptidase S26B family. Component of the signal peptidase complex paralog C (SPC-C) composed of a catalytic subunit SEC11C and three accessory subunits SPCS1, SPCS2 and SPCS3. Within the complex, interacts with SPCS2 and SPCS3. The complex induces a local thinning of the ER membrane which is used to measure the length of the signal peptide (SP) h-region of protein substrates. This ensures the selectivity of the complex towards h-regions shorter than 18-20 amino acids. Post-translationally, may undergo processing at the N-terminus.

Its subcellular location is the endoplasmic reticulum membrane. It catalyses the reaction Cleavage of hydrophobic, N-terminal signal or leader sequences from secreted and periplasmic proteins.. Its function is as follows. Catalytic component of the signal peptidase complex (SPC) which catalyzes the cleavage of N-terminal signal sequences from nascent proteins as they are translocated into the lumen of the endoplasmic reticulum. Specifically cleaves N-terminal signal peptides that contain a hydrophobic alpha-helix (h-region) shorter than 18-20 amino acids. The polypeptide is Signal peptidase complex catalytic subunit SEC11C (SEC11C) (Canis lupus familiaris (Dog)).